The chain runs to 111 residues: Resistin-like alpha (111 aa).

Positions 1 to 23 (MKTATCSLLICVFLLQLMVPVNT) are cleaved as a signal peptide. 5 disulfide bridges follow: cysteine 55–cysteine 108, cysteine 67–cysteine 107, cysteine 76–cysteine 93, cysteine 78–cysteine 95, and cysteine 82–cysteine 97.

The protein belongs to the resistin/FIZZ family. In terms of assembly, monomer. Highest levels in adipose tissue.

Its subcellular location is the secreted. Its function is as follows. Probable hormone. Plays a role in pulmonary vascular remodeling. This is Resistin-like alpha (Retnla) from Rattus norvegicus (Rat).